The sequence spans 492 residues: MAARPPASLSYRTTGSTCLHPLSQLLGIPLDQVNFVACQLFALSAAFWFRIYLHPGKASPEVRHTLATILGIYFVVFCFGWYAVHLFVLVLMCYGVMVTASVSNIHRYSFFVAMGYLTICHISRIYIFHYGILTTDFSGPLMIVTQKITTLAFQVHDGLGRKAEDLSAEQHRLAVKAKPSLLEYLSYHLNFMSVIAGPCNNFKDYVAFIEGRHIHMKLLEVNWTQRGFQSLPEPSPMGAVIQKLCVTLMSLLLFLTLSKSFPVTFLIDDWFVHKANFLSRLWYLYVVMQAAKPKYYFAWTLADAVHNAAGFGFNGMDTDGKSRWDLLSNLNIWKIETATSFKMYLENWNIQTSTWLKCVCYERVPWYPTVLTFLLSALWHGVYPGYYFTFLTGVPVTLAARAVRNNYRHHFLSSKARKIAYDVVTWAVTQLAVSYTAAPFVMLAVEPTISLYKSVFFFLHIICLLIILFLPIKPHQPQRQSRSPNSVKKKAD.

6 consecutive transmembrane segments (helical) span residues 33–53, 69–89, 125–145, 179–199, 237–257, and 296–316; these read VNFV…RIYL, ILGI…LFVL, IYIF…MIVT, PSLL…AGPC, MGAV…FLTL, and YFAW…FNGM. Residues Asn-349 and His-380 contribute to the active site. The next 3 helical transmembrane spans lie at 370–390, 423–443, and 452–472; these read VLTF…YFTF, VVTW…FVML, and YKSV…FLPI. Ser-486 carries the post-translational modification Phosphoserine.

The protein belongs to the membrane-bound acyltransferase family. Highly expressed in stomach, epididymis, and colon.

It localises to the endoplasmic reticulum membrane. The catalysed reaction is a 1-acyl-sn-glycero-3-phosphoethanolamine + an acyl-CoA = a 1,2-diacyl-sn-glycero-3-phosphoethanolamine + CoA. The enzyme catalyses a 1-acyl-sn-glycero-3-phospho-L-serine + an acyl-CoA = a 1,2-diacyl-sn-glycero-3-phospho-L-serine + CoA. It carries out the reaction a 1-acyl-sn-glycero-3-phosphocholine + an acyl-CoA = a 1,2-diacyl-sn-glycero-3-phosphocholine + CoA. It catalyses the reaction a 1-O-(1Z-alkenyl)-sn-glycero-3-phosphoethanolamine + (9Z)-octadecenoyl-CoA = 1-O-(1Z)-alkenyl-2-(9Z)-octadecenoyl-sn-glycero-3-phosphoethanolamine + CoA. The catalysed reaction is 1-octadecanoyl-sn-glycero-3-phosphoethanolamine + (9Z)-octadecenoyl-CoA = 1-octadecanoyl-2-(9Z-octadecenoyl)-sn-glycero-3-phosphoethanolamine + CoA. The enzyme catalyses 1-(9Z-octadecenoyl)-sn-glycero-3-phospho-L-serine + (9Z)-octadecenoyl-CoA = 1,2-di-(9Z)-octadecenoyl-sn-glycero-3-phospho-L-serine + CoA. It carries out the reaction 1-(9Z-octadecenoyl)-sn-glycero-3-phosphoethanolamine + (9Z)-octadecenoyl-CoA = 1,2-di-(9Z-octadecenoyl)-sn-glycero-3-phosphoethanolamine + CoA. It catalyses the reaction 1-hexadecanoyl-sn-glycero-3-phosphoethanolamine + (9Z)-octadecenoyl-CoA = 1-hexadecanoyl-2-(9Z-octadecenoyl)-sn-glycero-3-phosphoethanolamine + CoA. The catalysed reaction is 1-(10Z-heptadecenoyl)-sn-glycero-3-phosphoethanolamine + hexadecanoyl-CoA = 1-(10Z-heptadecenoyl)-2-hexadecanoyl-sn-glycero-3-phosphoethanolamine + CoA. The enzyme catalyses 1-(9Z-octadecenoyl)-sn-glycero-3-phospho-L-serine + octadecanoyl-CoA = 1-(9Z-octadecenoyl)-2-octadecanoyl-sn-glycero-3-phospho-L-serine + CoA. It carries out the reaction 1-(9Z-octadecenoyl)-sn-glycero-3-phospho-L-serine + (9Z)-hexadecenoyl-CoA = 1-(9Z-octadecenoyl)-2-(9Z-hexadecenoyl)-sn-glycero-3-phospho-L-serine + CoA. It catalyses the reaction 1-(9Z-octadecenoyl)-sn-glycero-3-phospho-L-serine + (9Z,12Z)-octadecadienoyl-CoA = 1-(9Z-octadecenoyl)-2-(9Z,12Z-octadienoyl)-sn-glycero-3-phospho-L-serine + CoA. The catalysed reaction is 1-hexadecanoyl-sn-glycero-3-phosphocholine + (9Z)-octadecenoyl-CoA = 1-hexadecanoyl-2-(9Z-octadecenoyl)-sn-glycero-3-phosphocholine + CoA. The enzyme catalyses 1-(10Z-heptadecenoyl)-sn-glycero-3-phosphoethanolamine + (9Z)-octadecenoyl-CoA = 1-(10Z-heptadecenoyl)-2-(9Z-octadecenoyl)-sn-glycero-3-phosphoethanolamine + CoA. Its pathway is lipid metabolism; phospholipid metabolism. Functionally, acyltransferase which catalyzes the transfer of an acyl group from an acyl-CoA towards a lysophospholipid producing a phospholipid and participates in the reacylation step of the phospholipid remodeling pathway also known as the Lands cycle. Acts on lysophosphatidylserine (1-acyl-2-hydroxy-sn-glycero-3-phospho-L-serine or LPS) and lysophosphatidylethanolamine (1-acyl-sn-glycero-3-phosphoethanolamine or LPE), and to a lesser extend lysophosphatidylcholine. Prefers oleoyl-CoA as the acyl donor and 1-oleoyl-LPE as acceptor. May play a role in neurite outgrowth during neuronal differentiation. The protein is Membrane-bound glycerophospholipid O-acyltransferase 1 of Mus musculus (Mouse).